We begin with the raw amino-acid sequence, 340 residues long: Uroporphyrinogen decarboxylase (340 aa).

Substrate-binding positions include 23-27, Asp-72, Tyr-147, Thr-202, and His-316; that span reads RQAGR.

It belongs to the uroporphyrinogen decarboxylase family. Homodimer.

The protein resides in the cytoplasm. It carries out the reaction uroporphyrinogen III + 4 H(+) = coproporphyrinogen III + 4 CO2. It functions in the pathway porphyrin-containing compound metabolism; protoporphyrin-IX biosynthesis; coproporphyrinogen-III from 5-aminolevulinate: step 4/4. Its function is as follows. Catalyzes the decarboxylation of four acetate groups of uroporphyrinogen-III to yield coproporphyrinogen-III. The sequence is that of Uroporphyrinogen decarboxylase from Trichlorobacter lovleyi (strain ATCC BAA-1151 / DSM 17278 / SZ) (Geobacter lovleyi).